The following is a 360-amino-acid chain: GTPase Obg (360 aa).

The Obg domain occupies 1–156 (MFVDSVEIII…KCVRLELKLI (156 aa)). One can recognise an OBG-type G domain in the interval 157 to 360 (ADIGLVGFPN…LKFVLLEALP (204 aa)). GTP is bound by residues 163–170 (GFPNAGKS), 188–192 (FTTLV), 210–213 (DIPG), 279–282 (NKCD), and 341–343 (SAV). Ser-170 and Thr-190 together coordinate Mg(2+).

Belongs to the TRAFAC class OBG-HflX-like GTPase superfamily. OBG GTPase family. Monomer. Requires Mg(2+) as cofactor.

It localises to the cytoplasm. Its function is as follows. An essential GTPase which binds GTP, GDP and possibly (p)ppGpp with moderate affinity, with high nucleotide exchange rates and a fairly low GTP hydrolysis rate. Plays a role in control of the cell cycle, stress response, ribosome biogenesis and in those bacteria that undergo differentiation, in morphogenesis control. This is GTPase Obg from Helicobacter acinonychis (strain Sheeba).